Consider the following 296-residue polypeptide: HTH-type transcriptional regulator GltR (296 aa).

Residues 1 to 58 (MNIQLLQVFLTTAREGSISKAALTLNYAQSNVTNKIQQLENDLQTKLFYRHSRGITLT) form the HTH lysR-type domain. Residues 18–37 (ISKAALTLNYAQSNVTNKIQ) constitute a DNA-binding region (H-T-H motif).

It belongs to the LysR transcriptional regulatory family.

Functionally, positive regulator of glutamate biosynthesis (gltAB genes). Negatively regulates its own expression. The protein is HTH-type transcriptional regulator GltR (gltR) of Bacillus subtilis (strain 168).